Here is a 161-residue protein sequence, read N- to C-terminus: Nucleotide-binding protein PFL_4775 (161 aa).

The protein belongs to the YajQ family.

In terms of biological role, nucleotide-binding protein. The chain is Nucleotide-binding protein PFL_4775 from Pseudomonas fluorescens (strain ATCC BAA-477 / NRRL B-23932 / Pf-5).